Here is a 252-residue protein sequence, read N- to C-terminus: 2-succinyl-6-hydroxy-2,4-cyclohexadiene-1-carboxylate synthase (252 aa).

Belongs to the AB hydrolase superfamily. MenH family. As to quaternary structure, monomer.

It catalyses the reaction 5-enolpyruvoyl-6-hydroxy-2-succinyl-cyclohex-3-ene-1-carboxylate = (1R,6R)-6-hydroxy-2-succinyl-cyclohexa-2,4-diene-1-carboxylate + pyruvate. It participates in quinol/quinone metabolism; 1,4-dihydroxy-2-naphthoate biosynthesis; 1,4-dihydroxy-2-naphthoate from chorismate: step 3/7. Its pathway is quinol/quinone metabolism; menaquinone biosynthesis. Functionally, catalyzes a proton abstraction reaction that results in 2,5-elimination of pyruvate from 2-succinyl-5-enolpyruvyl-6-hydroxy-3-cyclohexene-1-carboxylate (SEPHCHC) and the formation of 2-succinyl-6-hydroxy-2,4-cyclohexadiene-1-carboxylate (SHCHC). This Escherichia coli O157:H7 protein is 2-succinyl-6-hydroxy-2,4-cyclohexadiene-1-carboxylate synthase.